Reading from the N-terminus, the 118-residue chain is DNA mimic protein DMP12 (118 aa).

The protein belongs to the DMP12-like protein family. Monomer. Interacts with the dimeric form of the DNA-binding protein HU.

In terms of biological role, acts as a DNA mimic. Interacts with the DNA-binding protein HU and partially prevents the binding of HU protein to DNA by occupying the DNA binding sites on the protein. However, the relatively weak affinity of DMP12 for HU suggests that it may not completely block the HU protein-DNA binding, and that DMP12 is more likely to act as a regulator than a competitive inhibitor. It protects HU protein from limited digestion by trypsin in a limited trypsin digestion assay, suggesting that it may serve to protect the HU protein and improve the stability of unbound HU protein. This Neisseria meningitidis serogroup B (strain ATCC BAA-335 / MC58) protein is DNA mimic protein DMP12.